We begin with the raw amino-acid sequence, 348 residues long: Anthranilate phosphoribosyltransferase (348 aa).

5-phospho-alpha-D-ribose 1-diphosphate contacts are provided by residues Gly91, 94 to 95 (GD), Thr99, 101 to 104 (NIST), 119 to 127 (KHGNRSASG), and Ser131. Gly91 lines the anthranilate pocket. Residue Ser103 coordinates Mg(2+). An anthranilate-binding site is contributed by Asn122. Arg177 is a binding site for anthranilate. The Mg(2+) site is built by Asp236 and Glu237.

The protein belongs to the anthranilate phosphoribosyltransferase family. In terms of assembly, homodimer. Requires Mg(2+) as cofactor.

It catalyses the reaction N-(5-phospho-beta-D-ribosyl)anthranilate + diphosphate = 5-phospho-alpha-D-ribose 1-diphosphate + anthranilate. It participates in amino-acid biosynthesis; L-tryptophan biosynthesis; L-tryptophan from chorismate: step 2/5. Functionally, catalyzes the transfer of the phosphoribosyl group of 5-phosphorylribose-1-pyrophosphate (PRPP) to anthranilate to yield N-(5'-phosphoribosyl)-anthranilate (PRA). The sequence is that of Anthranilate phosphoribosyltransferase from Synechococcus sp. (strain ATCC 27144 / PCC 6301 / SAUG 1402/1) (Anacystis nidulans).